The primary structure comprises 308 residues: Testis-expressed protein 52 (308 aa).

In terms of tissue distribution, expressed in Testis.

The chain is Testis-expressed protein 52 from Mus musculus (Mouse).